A 482-amino-acid polypeptide reads, in one-letter code: Bactericidal permeability-increasing protein (482 aa).

An N-terminal signal peptide occupies residues 1–26; it reads MARGPDTARRWATLVVLAALSTAVTT. The central sheet, part 1 stretch occupies residues 27–36; it reads TNPGIVARIT. Positions 36-219 are N-terminal barrel; it reads TQKGLDYACQ…SKLQPYFQTL (184 aa). Residue N62 is glycosylated (N-linked (GlcNAc...) asparagine). C161 and C201 are oxidised to a cystine. The tract at residues 221–285 is central sheet, part 2; the sequence is VTTKLDKVAG…HDRMVYLGIS (65 aa). Residues 235 to 240 form a cleavage sites for elastase region; sequence LVAPPR. The C-terminal barrel stretch occupies residues 286–456; the sequence is EYFFNTAGFV…LQKGFPLPLP (171 aa). N-linked (GlcNAc...) asparagine glycosylation is found at N303, N375, N389, and N463. Residues 463-482 are central sheet, part 3; the sequence is NLTLQPYQDFLLFGADVHYS.

The protein belongs to the BPI/LBP/Plunc superfamily. BPI/LBP family. Monomer. Homodimer; disulfide-linked. As to expression, restricted to cells of the myeloid series.

The protein resides in the secreted. It localises to the cytoplasmic granule membrane. In terms of biological role, the cytotoxic action of BPI is limited to many species of Gram-negative bacteria; this specificity may be explained by a strong affinity of the very basic N-terminal half for the negatively charged lipopolysaccharides that are unique to the Gram-negative bacterial outer envelope. This Bos taurus (Bovine) protein is Bactericidal permeability-increasing protein (BPI).